A 418-amino-acid chain; its full sequence is Tyrosine--tRNA ligase (418 aa).

Residue Tyr34 participates in L-tyrosine binding. Positions 39 to 48 (PTADSLHLGH) match the 'HIGH' region motif. The L-tyrosine site is built by Tyr169 and Gln173. The 'KMSKS' region motif lies at 229–233 (KFGKS). ATP is bound at residue Lys232. Residues 352–418 (NNIVELLVSS…GKKKYFVLTY (67 aa)) form the S4 RNA-binding domain.

Belongs to the class-I aminoacyl-tRNA synthetase family. TyrS type 1 subfamily. In terms of assembly, homodimer.

The protein resides in the cytoplasm. It carries out the reaction tRNA(Tyr) + L-tyrosine + ATP = L-tyrosyl-tRNA(Tyr) + AMP + diphosphate + H(+). Catalyzes the attachment of tyrosine to tRNA(Tyr) in a two-step reaction: tyrosine is first activated by ATP to form Tyr-AMP and then transferred to the acceptor end of tRNA(Tyr). The polypeptide is Tyrosine--tRNA ligase (Streptococcus pneumoniae (strain CGSP14)).